Reading from the N-terminus, the 117-residue chain is MDMRVLAQLLGLLLLCFPGARCDIQMTQSPSSLSASVGDRVTITCRASQGISNYLAWFQQKPGKAPKSLIYAASSLQSGVPSKFSGSGSGTDFTLTISSLQPEDFATYYCQQYNSYP.

The first 22 residues, 1–22 (MDMRVLAQLLGLLLLCFPGARC), serve as a signal peptide directing secretion. The segment at 23–45 (DIQMTQSPSSLSASVGDRVTITC) is framework-1. The region spanning 24 to 117 (IQMTQSPSSL…YYCQQYNSYP (94 aa)) is the Ig-like domain. The cysteines at positions 45 and 110 are disulfide-linked. Residues 46–56 (RASQGISNYLA) form a complementarity-determining-1 region. The tract at residues 57-71 (WFQQKPGKAPKSLIY) is framework-2. The segment at 72-78 (AASSLQS) is complementarity-determining-2. The segment at 79–110 (GVPSKFSGSGSGTDFTLTISSLQPEDFATYYC) is framework-3. The segment at 111-117 (QQYNSYP) is complementarity-determining-3.

In terms of assembly, immunoglobulins are composed of two identical heavy chains and two identical light chains; disulfide-linked.

Its subcellular location is the secreted. The protein resides in the cell membrane. Functionally, v region of the variable domain of immunoglobulin light chains that participates in the antigen recognition. Immunoglobulins, also known as antibodies, are membrane-bound or secreted glycoproteins produced by B lymphocytes. In the recognition phase of humoral immunity, the membrane-bound immunoglobulins serve as receptors which, upon binding of a specific antigen, trigger the clonal expansion and differentiation of B lymphocytes into immunoglobulins-secreting plasma cells. Secreted immunoglobulins mediate the effector phase of humoral immunity, which results in the elimination of bound antigens. The antigen binding site is formed by the variable domain of one heavy chain, together with that of its associated light chain. Thus, each immunoglobulin has two antigen binding sites with remarkable affinity for a particular antigen. The variable domains are assembled by a process called V-(D)-J rearrangement and can then be subjected to somatic hypermutations which, after exposure to antigen and selection, allow affinity maturation for a particular antigen. The chain is Immunoglobulin kappa variable 1-16 from Homo sapiens (Human).